Consider the following 178-residue polypeptide: Methylmalonyl-CoA epimerase, mitochondrial (178 aa).

The transit peptide at 1 to 38 (MRRVVKAAALAAGATGLFSRVQTSVAIGRSFSTPQSQF) directs the protein to the mitochondrion. Residues 49 to 178 (RLNHVAVAVP…GGVLVELEQA (130 aa)) form the VOC domain. His-52 contributes to the Co(2+) binding site. Residue Lys-116 is modified to N6-succinyllysine. Residue His-124 participates in Co(2+) binding. Lys-152 is subject to N6-acetyllysine; alternate. At Lys-152 the chain carries N6-succinyllysine; alternate. Glu-174 is a binding site for Co(2+).

It belongs to the methylmalonyl-CoA epimerase family.

The protein resides in the mitochondrion. It carries out the reaction (R)-methylmalonyl-CoA = (S)-methylmalonyl-CoA. In terms of biological role, methylmalonyl-CoA epimerase involved in propionyl-CoA metabolism. The protein is Methylmalonyl-CoA epimerase, mitochondrial of Mus musculus (Mouse).